The following is a 162-amino-acid chain: Eukaryotic translation initiation factor 5 (162 aa).

The disordered stretch occupies residues 59-162 (PPNLNPAVQG…EKDRMDIFYE (104 aa)). A compositionally biased stretch (polar residues) spans 85 to 109 (GDTNGDTSQVDDQNESLEASVNENS). A compositionally biased stretch (basic and acidic residues) spans 148 to 162 (DLEKREKDRMDIFYE).

The protein belongs to the eIF-2-beta/eIF-5 family.

Functionally, catalyzes the hydrolysis of GTP bound to the 40S ribosomal initiation complex (40S.mRNA.Met-tRNA[F].eIF-2.GTP) with the subsequent joining of a 60S ribosomal subunit resulting in the release of eIF-2 and the guanine nucleotide. The subsequent joining of a 60S ribosomal subunit results in the formation of a functional 80S initiation complex (80S.mRNA.Met-tRNA[F]). This chain is Eukaryotic translation initiation factor 5, found in Tribolium castaneum (Red flour beetle).